A 662-amino-acid chain; its full sequence is DCC-interacting protein 13-beta (662 aa).

The 266-residue stretch at 3 to 268 (AVDKLLLEEA…ESVYTPDIDV (266 aa)) folds into the BAR domain. In terms of domain architecture, PH spans 277–375 (LIQKTGYLNL…WICAINNISR (99 aa)). Residues 486 to 635 (SLLQQMFIVR…LMLSVPLTND (150 aa)) enclose the PID domain. The tract at residues 643–662 (DQADDTGGSPSDHRGAESEA) is disordered. Residues 653-662 (SDHRGAESEA) show a composition bias toward basic and acidic residues.

Homodimer. Homotetramer. Binds RAB5A/Rab5 through an N-terminal domain. This interaction is essential for its recruitment to endosomal membranes as well as its role in cell proliferation. Binds subunits of the NuRD/MeCP1 complex. Interacts with FSHR; interaction is independent of follicle stimulating hormone stimulation. Interacts with APPL1; the interaction is decreased by adiponectin in a time-dependent manner. Forms a complex comprising APPL1, RUVBL2, CTNNB1, HDAC1 and HDAC2; interaction reduces interaction between CTNNB1, HDAC1, HDAC2 and RUVBL2 leading to the decrease of deacetylase activity of this complex; affects the recruitment of repressive complexes to the Wnt target genes. Interacts (via BAR domain) with TBC1D1; interaction is dependent of TBC1D1 phosphorylation at 'Ser-235'; interaction diminishes the phosphorylation of TBC1D1 at 'Thr-596', resulting in inhibition of SLC2A4 translocation and glucose uptake. Interacts with ANXA2; targets APPL2 to endosomes and acting in parallel to RAB5A. Interacts with RAB31 (in GTP-bound form); interaction contributes to or enhances recruitment of APPL2 to the phagosomes; interaction enhances Fc-gamma receptor-mediated phagocytosis through PI3K/Akt signaling in macrophages. Interacts with PIK3R1; forms a complex with PIK3R1 and APPL1. Interacts (via BAR domain) with ADIPOR1; hinders the accessibility of APPL1 to ADIPOR1; negatively regulates adiponectin signaling; ADIPOQ dissociates this interaction and facilitates the recruitment of APPL1 to ADIPOR1. Interacts (via BAR domain) with ADIPOR2; ADIPOQ dissociates this interaction.

It localises to the early endosome membrane. Its subcellular location is the nucleus. The protein resides in the cell membrane. It is found in the endosome membrane. The protein localises to the cytoplasm. It localises to the cytoplasmic vesicle. Its subcellular location is the phagosome. The protein resides in the cell projection. It is found in the ruffle. The protein localises to the ruffle membrane. It localises to the phagosome membrane. Its function is as follows. Multifunctional adapter protein that binds to various membrane receptors, nuclear factors and signaling proteins to regulate many processes, such as cell proliferation, immune response, endosomal trafficking and cell metabolism. Regulates signaling pathway leading to cell proliferation through interaction with RAB5A and subunits of the NuRD/MeCP1 complex. Plays a role in immune response by modulating phagocytosis, inflammatory and innate immune responses. In macrophages, enhances Fc-gamma receptor-mediated phagocytosis through interaction with RAB31 leading to activation of PI3K/Akt signaling. In response to LPS, modulates inflammatory responses by playing a key role on the regulation of TLR4 signaling and in the nuclear translocation of RELA/NF-kappa-B p65 and the secretion of pro- and anti-inflammatory cytokines. Also functions as a negative regulator of innate immune response via inhibition of AKT1 signaling pathway by forming a complex with APPL1 and PIK3R1. Plays a role in endosomal trafficking of TGFBR1 from the endosomes to the nucleus. Plays a role in cell metabolism by regulating adiponecting ans insulin signaling pathways and adaptative thermogenesis. In muscle, negatively regulates adiponectin-simulated glucose uptake and fatty acid oyidation by inhibiting adiponectin signaling pathway through APPL1 sequestration thereby antagonizing APPL1 action. In muscles, negatively regulates insulin-induced plasma membrane recruitment of GLUT4 and glucose uptake through interaction with TBC1D1. Plays a role in cold and diet-induced adaptive thermogenesis by activating ventromedial hypothalamus (VMH) neurons throught AMPK inhibition which enhances sympathetic outflow to subcutaneous white adipose tissue (sWAT), sWAT beiging and cold tolerance. Also plays a role in other signaling pathways namely Wnt/beta-catenin, HGF and glucocorticoid receptor signaling. Positive regulator of beta-catenin/TCF-dependent transcription through direct interaction with RUVBL2/reptin resulting in the relief of RUVBL2-mediated repression of beta-catenin/TCF target genes by modulating the interactions within the beta-catenin-reptin-HDAC complex. May affect adult neurogenesis in hippocampus and olfactory system via regulating the sensitivity of glucocorticoid receptor. Required for fibroblast migration through HGF cell signaling. This Rattus norvegicus (Rat) protein is DCC-interacting protein 13-beta.